Consider the following 355-residue polypeptide: Elongation factor Ts (355 aa).

The interval 82–85 (TDFV) is involved in Mg(2+) ion dislocation from EF-Tu.

Belongs to the EF-Ts family.

It is found in the cytoplasm. Associates with the EF-Tu.GDP complex and induces the exchange of GDP to GTP. It remains bound to the aminoacyl-tRNA.EF-Tu.GTP complex up to the GTP hydrolysis stage on the ribosome. In Helicobacter pylori (strain P12), this protein is Elongation factor Ts.